The sequence spans 79 residues: uncharacterized protein (79 aa).

The first 19 residues, 1-19 (MKYVALAFVLSLVILQISA), serve as a signal peptide directing secretion. Residues 52-71 (RGRKSRTQSGRNQGKSTSDS) form a disordered region. The segment covering 58–71 (TQSGRNQGKSTSDS) has biased composition (polar residues).

As to expression, nacreous layer of shell (at protein level). Expressed primarily in the mantle with highest level in the mantle pallium and lower level in the mantle edge.

The protein resides in the secreted. This is an uncharacterized protein from Margaritifera margaritifera (Freshwater pearl mussel).